Reading from the N-terminus, the 145-residue chain is Putative BCoR-like protein 2 (145 aa).

Positions 1-27 are enriched in basic and acidic residues; it reads MKEKLSKKRAEVKGNRSWLEEFLKPSD. A disordered region spans residues 1 to 58; it reads MKEKLSKKRAEVKGNRSWLEEFLKPSDNEEGPPPKNKVLSNNASSQKPTHSSCIPLLR. Over residues 38–52 the composition is skewed to polar residues; it reads VLSNNASSQKPTHSS.

This sequence belongs to the BCOR family.

In Homo sapiens (Human), this protein is Putative BCoR-like protein 2 (BCORP1).